The following is a 144-amino-acid chain: Small ribosomal subunit protein bS6 (144 aa).

The interval 97 to 144 (DTEQSLIMKSKDEKGDKPERSERRRRDDEEGDAAPAATDTDGDNAEAA) is disordered. Residues 105–124 (KSKDEKGDKPERSERRRRDD) are compositionally biased toward basic and acidic residues.

This sequence belongs to the bacterial ribosomal protein bS6 family.

Binds together with bS18 to 16S ribosomal RNA. The chain is Small ribosomal subunit protein bS6 from Xanthomonas campestris pv. campestris (strain 8004).